The sequence spans 153 residues: Calmodulin-like protein 4 (153 aa).

EF-hand domains follow at residues 8–43, 44–79, 81–116, and 117–152; these read DQINEYKECFSLYDKQQRGKIKATDLLTVMRCLGAS, PTPGEAQRHLQTHRIDRNGELDFSTFLTIMHMQIKQ, DPKKEILLAMLMADKEKKGYIMASELRSKLMQLGEK, and LTHKEVEDLFREAGIEPNGKVKYDEFIQKLTIPVRD.

The protein belongs to the calmodulin family. Interacts with MYO7B; the interaction mediates the association of CALML4 with the IMAC/intermicrovillar adhesion complex. Interacts with MYO7A.

The protein resides in the cell projection. It localises to the microvillus. Functionally, as part of the intermicrovillar adhesion complex/IMAC plays a role in epithelial brush border differentiation, controlling microvilli organization and length. Acts as a light chain for MYO7B and is required for efficient targeting of the IMAC to the tips of border brush microvilli. The sequence is that of Calmodulin-like protein 4 (CALML4) from Bos taurus (Bovine).